The chain runs to 356 residues: Protein pelota homolog (356 aa).

This sequence belongs to the eukaryotic release factor 1 family. Pelota subfamily. Monomer. The cofactor is a divalent metal cation.

It localises to the cytoplasm. In terms of biological role, may function in recognizing stalled ribosomes, interact with stem-loop structures in stalled mRNA molecules, and effect endonucleolytic cleavage of the mRNA. May play a role in the release non-functional ribosomes and degradation of damaged mRNAs. Has endoribonuclease activity. This Pyrococcus abyssi (strain GE5 / Orsay) protein is Protein pelota homolog.